The sequence spans 338 residues: Aspartate carbamoyltransferase catalytic subunit (338 aa).

Carbamoyl phosphate-binding residues include arginine 59 and threonine 60. Lysine 87 contributes to the L-aspartate binding site. Carbamoyl phosphate-binding residues include arginine 109, histidine 142, and glutamine 145. L-aspartate is bound by residues arginine 182 and arginine 253. Carbamoyl phosphate is bound by residues glycine 294 and proline 295.

Belongs to the aspartate/ornithine carbamoyltransferase superfamily. ATCase family. Heterododecamer (2C3:3R2) of six catalytic PyrB chains organized as two trimers (C3), and six regulatory PyrI chains organized as three dimers (R2).

The catalysed reaction is carbamoyl phosphate + L-aspartate = N-carbamoyl-L-aspartate + phosphate + H(+). It functions in the pathway pyrimidine metabolism; UMP biosynthesis via de novo pathway; (S)-dihydroorotate from bicarbonate: step 2/3. In terms of biological role, catalyzes the condensation of carbamoyl phosphate and aspartate to form carbamoyl aspartate and inorganic phosphate, the committed step in the de novo pyrimidine nucleotide biosynthesis pathway. The polypeptide is Aspartate carbamoyltransferase catalytic subunit (Prochlorococcus marinus (strain SARG / CCMP1375 / SS120)).